We begin with the raw amino-acid sequence, 285 residues long: Transmembrane protein DDB_G0269096 (285 aa).

Disordered regions lie at residues 1-25 (MEDRNLERNIGSDISSSSSIDMSQS) and 59-87 (SFENGENNNNNNNNNNNNNNNNNNNNNKN). Composition is skewed to low complexity over residues 12–25 (SDISSSSSIDMSQS) and 65–85 (NNNNNNNNNNNNNNNNNNNNN). 5 consecutive transmembrane segments (helical) span residues 124 to 144 (LEEIGWTWLASFTGILVLALI), 152 to 172 (AQMQVLIGSFAASAVIIFGVP), 182 to 202 (LIMGHFLSAVVGSVIRVALVY), 205 to 225 (ANFEVACALAVSLSIMLMQFT), and 250 to 270 (FYFIFVPILSGALIMLLTALV).

It localises to the membrane. The sequence is that of Transmembrane protein DDB_G0269096 from Dictyostelium discoideum (Social amoeba).